The following is a 373-amino-acid chain: tRNA-specific 2-thiouridylase MnmA (373 aa).

ATP is bound by residues G12 to S19 and M38. Residues N98 to D100 form an interaction with target base in tRNA region. C103 acts as the Nucleophile in catalysis. A disulfide bridge links C103 with C200. G127 is a binding site for ATP. The tract at residues K150 to Q152 is interaction with tRNA. C200 (cysteine persulfide intermediate) is an active-site residue. The interval R312–Y313 is interaction with tRNA.

It belongs to the MnmA/TRMU family.

It localises to the cytoplasm. The catalysed reaction is S-sulfanyl-L-cysteinyl-[protein] + uridine(34) in tRNA + AH2 + ATP = 2-thiouridine(34) in tRNA + L-cysteinyl-[protein] + A + AMP + diphosphate + H(+). Catalyzes the 2-thiolation of uridine at the wobble position (U34) of tRNA, leading to the formation of s(2)U34. This chain is tRNA-specific 2-thiouridylase MnmA, found in Streptococcus agalactiae serotype Ia (strain ATCC 27591 / A909 / CDC SS700).